The chain runs to 234 residues: Probable transcriptional regulatory protein PSPTO_3162 (234 aa).

Belongs to the TACO1 family.

The protein resides in the cytoplasm. In Pseudomonas syringae pv. tomato (strain ATCC BAA-871 / DC3000), this protein is Probable transcriptional regulatory protein PSPTO_3162.